The primary structure comprises 321 residues: Olfactory receptor 5K3 (321 aa).

Residues 1–25 (MNKENHSLIAEFILTGFTYHPKLKT) lie on the Extracellular side of the membrane. Residue N5 is glycosylated (N-linked (GlcNAc...) asparagine). Residues 26–46 (VLFVVFFAIYLITMVGNIGLV) form a helical membrane-spanning segment. Over 47 to 56 (ALIYIEQRLH) the chain is Cytoplasmic. A helical membrane pass occupies residues 57 to 77 (TPMYIFLGNLVLMDSCCSSAI). Topologically, residues 78-97 (TPKMLENFFSEDKRITLYEC) are extracellular. A disulfide bond links C97 and C179. A helical membrane pass occupies residues 98–118 (MAQFYFLCLAETTDCFLLAAM). Residues 119-143 (AYDCYVAICNPLQYHTMMSKTLCIQ) are Cytoplasmic-facing. A helical membrane pass occupies residues 144-164 (MTAGAYLAGNLHPMIEVEFLL). Residues 165-196 (RLTFCGSHQINHFFCDVLPLYRLSCINPYINE) lie on the Extracellular side of the membrane. Residues 197–217 (LVLFILAGSIQIFTIVLVSYF) form a helical membrane-spanning segment. Topologically, residues 218 to 235 (YILFTIFTMKSKEGRGKA) are cytoplasmic. A helical transmembrane segment spans residues 236-256 (LSTCASHFLSVSIFCDSLLFM). At 257 to 269 (YARPGAVNEGDKD) the chain is on the extracellular side. The helical transmembrane segment at 270-290 (IPVAIFYTLVIPLLNPFIYSL) threads the bilayer. The Cytoplasmic segment spans residues 291–321 (RNKEVINIMKKIMKKRKFCHILKQMSSPLAT).

This sequence belongs to the G-protein coupled receptor 1 family.

It is found in the cell membrane. Functionally, odorant receptor. The chain is Olfactory receptor 5K3 (OR5K3) from Homo sapiens (Human).